The following is a 940-amino-acid chain: Translation initiation factor IF-2 (940 aa).

4 disordered regions span residues 116–137 (PEQE…SSDT), 151–196 (EVEA…EQRS), 210–294 (AVRK…VKKV), and 318–346 (HSAP…VANR). The segment covering 121 to 137 (LESTSVAEIPESVSSDT) has biased composition (polar residues). Residues 159 to 180 (PEPEVEATPEPEVEDVVAEEAE) show a composition bias toward acidic residues. Residues 181–193 (PAAAEPAPAPVVE) are compositionally biased toward low complexity. Residues 213–239 (KKAEEEAEVARRKADAEKAEAAAKQKA) are compositionally biased toward basic and acidic residues. Positions 282 to 294 (KHNKKAGKAVKKV) are enriched in basic residues. Residues 326–337 (GGQNNNSSNSGS) show a composition bias toward low complexity. Positions 441–610 (ARAPVVTVMG…ALQAELLELS (170 aa)) constitute a tr-type G domain. The segment at 450–457 (GHVDHGKT) is G1. Residue 450 to 457 (GHVDHGKT) coordinates GTP. Residues 475 to 479 (GITQH) form a G2 region. A G3 region spans residues 496–499 (DTPG). GTP contacts are provided by residues 496–500 (DTPGH) and 550–553 (NKID). The interval 550–553 (NKID) is G4. The segment at 586 to 588 (SAQ) is G5.

It belongs to the TRAFAC class translation factor GTPase superfamily. Classic translation factor GTPase family. IF-2 subfamily.

The protein localises to the cytoplasm. One of the essential components for the initiation of protein synthesis. Protects formylmethionyl-tRNA from spontaneous hydrolysis and promotes its binding to the 30S ribosomal subunits. Also involved in the hydrolysis of GTP during the formation of the 70S ribosomal complex. This Teredinibacter turnerae (strain ATCC 39867 / T7901) protein is Translation initiation factor IF-2.